Reading from the N-terminus, the 67-residue chain is Large ribosomal subunit protein bL31 (67 aa).

The protein belongs to the bacterial ribosomal protein bL31 family. Type A subfamily. In terms of assembly, part of the 50S ribosomal subunit.

Binds the 23S rRNA. The polypeptide is Large ribosomal subunit protein bL31 (Leptospira borgpetersenii serovar Hardjo-bovis (strain JB197)).